Here is a 313-residue protein sequence, read N- to C-terminus: Porphobilinogen deaminase (313 aa).

Cys242 carries the post-translational modification S-(dipyrrolylmethanemethyl)cysteine.

It belongs to the HMBS family. As to quaternary structure, monomer. It depends on dipyrromethane as a cofactor.

It catalyses the reaction 4 porphobilinogen + H2O = hydroxymethylbilane + 4 NH4(+). Its pathway is porphyrin-containing compound metabolism; protoporphyrin-IX biosynthesis; coproporphyrinogen-III from 5-aminolevulinate: step 2/4. Its function is as follows. Tetrapolymerization of the monopyrrole PBG into the hydroxymethylbilane pre-uroporphyrinogen in several discrete steps. The chain is Porphobilinogen deaminase from Escherichia coli O17:K52:H18 (strain UMN026 / ExPEC).